Reading from the N-terminus, the 77-residue chain is DNA-directed RNA polymerase subunit Rpo5 (77 aa).

This sequence belongs to the archaeal Rpo5/eukaryotic RPB5 RNA polymerase subunit family. Part of the RNA polymerase complex.

The protein localises to the cytoplasm. It catalyses the reaction RNA(n) + a ribonucleoside 5'-triphosphate = RNA(n+1) + diphosphate. DNA-dependent RNA polymerase (RNAP) catalyzes the transcription of DNA into RNA using the four ribonucleoside triphosphates as substrates. The polypeptide is DNA-directed RNA polymerase subunit Rpo5 (Methanosphaera stadtmanae (strain ATCC 43021 / DSM 3091 / JCM 11832 / MCB-3)).